The sequence spans 60 residues: Large ribosomal subunit protein bL32 (60 aa).

A disordered region spans residues 1-60 (MAVQQNKKSRSARDMRRSHDALEASTLSVEKSTGEVHLRHHVSPEGVYRGRKVIDKGADE). The segment covering 11–22 (SARDMRRSHDAL) has biased composition (basic and acidic residues).

It belongs to the bacterial ribosomal protein bL32 family.

The polypeptide is Large ribosomal subunit protein bL32 (Ectopseudomonas mendocina (strain ymp) (Pseudomonas mendocina)).